We begin with the raw amino-acid sequence, 161 residues long: NAD(P)H-quinone oxidoreductase subunit I, chloroplastic (161 aa).

4Fe-4S ferredoxin-type domains follow at residues 55-84 (GRIHFEFDKCIACEVCVRVCPIDLPVVDWK) and 95-124 (LNYSIDFGICIFCGNCIEYCPTNCLSMTEE). Cys64, Cys67, Cys70, Cys74, Cys104, Cys107, Cys110, and Cys114 together coordinate [4Fe-4S] cluster.

Belongs to the complex I 23 kDa subunit family. NDH is composed of at least 16 different subunits, 5 of which are encoded in the nucleus. It depends on [4Fe-4S] cluster as a cofactor.

It localises to the plastid. Its subcellular location is the chloroplast thylakoid membrane. It carries out the reaction a plastoquinone + NADH + (n+1) H(+)(in) = a plastoquinol + NAD(+) + n H(+)(out). It catalyses the reaction a plastoquinone + NADPH + (n+1) H(+)(in) = a plastoquinol + NADP(+) + n H(+)(out). Functionally, NDH shuttles electrons from NAD(P)H:plastoquinone, via FMN and iron-sulfur (Fe-S) centers, to quinones in the photosynthetic chain and possibly in a chloroplast respiratory chain. The immediate electron acceptor for the enzyme in this species is believed to be plastoquinone. Couples the redox reaction to proton translocation, and thus conserves the redox energy in a proton gradient. The polypeptide is NAD(P)H-quinone oxidoreductase subunit I, chloroplastic (Lotus japonicus (Lotus corniculatus var. japonicus)).